Consider the following 140-residue polypeptide: L-fucose mutarotase (140 aa).

Histidine 22 (proton donor) is an active-site residue. Substrate-binding positions include aspartate 30, arginine 107, and 129 to 131; that span reads YGN.

The protein belongs to the RbsD / FucU family. FucU mutarotase subfamily. As to quaternary structure, homodecamer.

The protein resides in the cytoplasm. The catalysed reaction is alpha-L-fucose = beta-L-fucose. It functions in the pathway carbohydrate metabolism; L-fucose metabolism. Functionally, involved in the anomeric conversion of L-fucose. The chain is L-fucose mutarotase from Salmonella gallinarum (strain 287/91 / NCTC 13346).